A 194-amino-acid polypeptide reads, in one-letter code: Large ribosomal subunit protein eL15 (194 aa).

A disordered region spans residues 164–194; the sequence is SAGKKGRGLRNKGKGAEKVRPSVRANKGKTK. Residues 167–176 show a composition bias toward basic residues; sequence KKGRGLRNKG.

It belongs to the eukaryotic ribosomal protein eL15 family.

This Thermococcus gammatolerans (strain DSM 15229 / JCM 11827 / EJ3) protein is Large ribosomal subunit protein eL15.